Reading from the N-terminus, the 61-residue chain is Large ribosomal subunit protein eL37 (61 aa).

Residues C19, C22, C34, and C37 each coordinate Zn(2+). The segment at 19–37 (CRRCGRNAYNVSKHYCAAC) adopts a C4-type zinc-finger fold.

It belongs to the eukaryotic ribosomal protein eL37 family. Requires Zn(2+) as cofactor.

In terms of biological role, binds to the 23S rRNA. The polypeptide is Large ribosomal subunit protein eL37 (Saccharolobus islandicus (strain Y.N.15.51 / Yellowstone #2) (Sulfolobus islandicus)).